We begin with the raw amino-acid sequence, 376 residues long: Ribonuclease D (376 aa).

Positions 8–176 constitute a 3'-5' exonuclease domain; sequence IQWIRDDASL…VYLALDARLS (169 aa). In terms of domain architecture, HRDC spans 214–294; that stretch reads RPQQLAVLRE…AEAARLPQSE (81 aa).

Belongs to the RNase D family. A divalent metal cation is required as a cofactor.

The protein localises to the cytoplasm. It catalyses the reaction Exonucleolytic cleavage that removes extra residues from the 3'-terminus of tRNA to produce 5'-mononucleotides.. Functionally, exonuclease involved in the 3' processing of various precursor tRNAs. Initiates hydrolysis at the 3'-terminus of an RNA molecule and releases 5'-mononucleotides. This chain is Ribonuclease D, found in Pseudomonas paraeruginosa (strain DSM 24068 / PA7) (Pseudomonas aeruginosa (strain PA7)).